The following is a 275-amino-acid chain: MANIKAKKYYSYAKINLFLHILNKRTDGYHNLQTWFTFLDLKDQLTFSFNNSREINISSNISIAAKQDNLVYKAIKKFQQSYRVQDIGVDIEIKKNIPMGAGLGGGSSNAATTLIALRDYYLPQLSNEEMIPLAVKLGADVPIFVYGKSAWAEGIGEILYHKDFSPQYALLIKPDIHISTKEFFTSEDLIKSSVLISKDLGFDKSIMHNDFENVFYAKYPEFSQYLKELDSDFRMTGTGSCFYLLSADKNKLEQLTRKINKPLDKWLVKTLNYVY.

Residue lysine 14 is part of the active site. Position 98–108 (98–108 (PMGAGLGGGSS)) interacts with ATP. The active site involves aspartate 140.

The protein belongs to the GHMP kinase family. IspE subfamily.

It carries out the reaction 4-CDP-2-C-methyl-D-erythritol + ATP = 4-CDP-2-C-methyl-D-erythritol 2-phosphate + ADP + H(+). The protein operates within isoprenoid biosynthesis; isopentenyl diphosphate biosynthesis via DXP pathway; isopentenyl diphosphate from 1-deoxy-D-xylulose 5-phosphate: step 3/6. Its function is as follows. Catalyzes the phosphorylation of the position 2 hydroxy group of 4-diphosphocytidyl-2C-methyl-D-erythritol. This chain is 4-diphosphocytidyl-2-C-methyl-D-erythritol kinase, found in Francisella tularensis subsp. holarctica (strain FTNF002-00 / FTA).